An 883-amino-acid polypeptide reads, in one-letter code: Collagen, type I, alpha 1b (883 aa).

Residues 1 to 883 (QMSYVDHSKS…LGGSNDVELR (883 aa)) are disordered. Residues 13 to 33 (PPQPGPMGPMGPRGPPGPPGS) are compositionally biased toward pro residues. Composition is skewed to low complexity over residues 34–57 (SGPQGFTGPPGEPGEPGASGAMGS), 113–122 (VPGVMGARGR), and 129–140 (SGARGNDGNTGP). 2 stretches are compositionally biased toward gly residues: residues 147–161 (TGGETGPAGGRGNEG) and 185–194 (GTDGGPGAKG). 3 stretches are compositionally biased toward low complexity: residues 195–205 (SPGAAGLAGAP), 214–223 (AQGAVGAPGP), and 230–248 (PGASGPKGEPGAKGEPGPA). The span at 285 to 297 (GADGGAGGKGAPG) shows a compositional bias: gly residues. Low complexity-rich tracts occupy residues 310 to 326 (ATGESGSPGAPGAPGSK) and 390 to 402 (VGAPGPSGVAGPA). Gly residues predominate over residues 415–424 (GAPGLGGPTG). Residues 425 to 444 (ARGAPGPAGNDGAKGEPGAA) are compositionally biased toward low complexity. 2 stretches are compositionally biased toward gly residues: residues 445 to 454 (GAPGGLGAPG) and 478 to 487 (GGKGGDGAPG). Low complexity predominate over residues 512-542 (AGPTGPRGETGPPGPAGFAGPPGADGQPGAK). The span at 564–573 (GPKGGAGPPG) shows a compositional bias: gly residues. Low complexity-rich tracts occupy residues 574–584 (ATGFPGPAGRV), 717–726 (APGAVGPSGK), and 742–756 (SGPAGVRGPAGPAGA). Basic and acidic residues predominate over residues 757–771 (KGDRGEAGEAGDRGH). The span at 792 to 812 (PAGASGPAGPRGPAGSNGAPG) shows a compositional bias: low complexity. The segment covering 821-836 (AGPPGPPGPAGPPGPP) has biased composition (pro residues).

The protein belongs to the fibrillar collagen family.

The protein is Collagen, type I, alpha 1b of Epinephelus costae (Goldblotch grouper).